A 310-amino-acid polypeptide reads, in one-letter code: Deoxyribonuclease gamma (310 aa).

An N-terminal signal peptide occupies residues 1-25; sequence MSLHPASPRLASLLLFILALHDTLA. Residues 40 to 56 carry the Bipartite nuclear localization signal motif; that stretch reads KKENHEAMDIIVKIIKR. Catalysis depends on residues Glu-105 and His-160. The cysteines at positions 199 and 236 are disulfide-linked. The segment at 289 to 310 is not required for free DNA-nuclease activity but required for activity towards liposome-coated DNA; it reads SRAFTNNRKSVSLKKRKKGNRS. A Nuclear localization signal motif is present at residues 301–307; sequence LKKRKKG.

Belongs to the DNase I family. It depends on Ca(2+) as a cofactor. Requires Mg(2+) as cofactor. In terms of processing, poly-ADP-ribosylated by PARP1. ADP-ribosylation negatively regulates enzymatic activity during apoptosis. In terms of tissue distribution, expressed at high levels in liver, spleen and testes. Expressed at lower levels in heart, lungs, skeletal muscle and kidney. Not expressed in brain. Predominantly expressed in macrophages; at protein level. Secreted by mononuclear phagocytes.

The protein resides in the nucleus. Its subcellular location is the endoplasmic reticulum. It localises to the secreted. Its activity is regulated as follows. Inhibited by zinc. Inhibited by heparin and proteolysis by plasmin. In terms of biological role, has DNA hydrolytic activity. Is capable of both single- and double-stranded DNA cleavage, producing DNA fragments with 3'-OH ends. Can cleave chromatin to nucleosomal units and cleaves nucleosomal and liposome-coated DNA. Acts in internucleosomal DNA fragmentation (INDF) during apoptosis and necrosis. The role in apoptosis includes myogenic and neuronal differentiation, and BCR-mediated clonal deletion of self-reactive B cells. Is active on chromatin in apoptotic cell-derived membrane-coated microparticles and thus suppresses anti-DNA autoimmunity. Together with DNASE1, plays a key role in degrading neutrophil extracellular traps (NETs). NETs are mainly composed of DNA fibers and are released by neutrophils to bind pathogens during inflammation. Degradation of intravascular NETs by DNASE1 and DNASE1L3 is required to prevent formation of clots that obstruct blood vessels and cause organ damage following inflammation. In Mus musculus (Mouse), this protein is Deoxyribonuclease gamma.